The primary structure comprises 561 residues: DNA ligase B (561 aa).

The active-site N6-AMP-lysine intermediate is the Lys125.

The protein belongs to the NAD-dependent DNA ligase family. LigB subfamily.

The enzyme catalyses NAD(+) + (deoxyribonucleotide)n-3'-hydroxyl + 5'-phospho-(deoxyribonucleotide)m = (deoxyribonucleotide)n+m + AMP + beta-nicotinamide D-nucleotide.. Functionally, catalyzes the formation of phosphodiester linkages between 5'-phosphoryl and 3'-hydroxyl groups in double-stranded DNA using NAD as a coenzyme and as the energy source for the reaction. In Salmonella enteritidis PT4 (strain P125109), this protein is DNA ligase B.